The following is a 666-amino-acid chain: tRNA 5-methylaminomethyl-2-thiouridine biosynthesis bifunctional protein MnmC (666 aa).

Positions 1–245 (MKQYAIQPAT…KREMLCGVME (245 aa)) are tRNA (mnm(5)s(2)U34)-methyltransferase. The FAD-dependent cmnm(5)s(2)U34 oxidoreductase stretch occupies residues 270-666 (IGGGIASALL…RKLLKGKAVK (397 aa)).

The protein in the N-terminal section; belongs to the methyltransferase superfamily. tRNA (mnm(5)s(2)U34)-methyltransferase family. It in the C-terminal section; belongs to the DAO family. FAD serves as cofactor.

It is found in the cytoplasm. It catalyses the reaction 5-aminomethyl-2-thiouridine(34) in tRNA + S-adenosyl-L-methionine = 5-methylaminomethyl-2-thiouridine(34) in tRNA + S-adenosyl-L-homocysteine + H(+). Functionally, catalyzes the last two steps in the biosynthesis of 5-methylaminomethyl-2-thiouridine (mnm(5)s(2)U) at the wobble position (U34) in tRNA. Catalyzes the FAD-dependent demodification of cmnm(5)s(2)U34 to nm(5)s(2)U34, followed by the transfer of a methyl group from S-adenosyl-L-methionine to nm(5)s(2)U34, to form mnm(5)s(2)U34. The chain is tRNA 5-methylaminomethyl-2-thiouridine biosynthesis bifunctional protein MnmC from Salmonella paratyphi A (strain ATCC 9150 / SARB42).